We begin with the raw amino-acid sequence, 354 residues long: F-box/kelch-repeat protein At1g80440 (354 aa).

The region spanning 2-49 is the F-box domain; it reads ELIPNLPDDVARECLLRSSYQQFPVIASVCRAWNREVSLSQFLHQRKA. Kelch repeat units follow at residues 63 to 110, 115 to 163, 166 to 213, and 215 to 263; these read RVDP…CRLV, DLIV…ASDS, TVLV…FHAG, and FHVI…PPTC.

In Arabidopsis thaliana (Mouse-ear cress), this protein is F-box/kelch-repeat protein At1g80440.